Reading from the N-terminus, the 556-residue chain is 2-succinyl-5-enolpyruvyl-6-hydroxy-3-cyclohexene-1-carboxylate synthase (556 aa).

It belongs to the TPP enzyme family. MenD subfamily. Homodimer. Mg(2+) serves as cofactor. Mn(2+) is required as a cofactor. It depends on thiamine diphosphate as a cofactor.

The enzyme catalyses isochorismate + 2-oxoglutarate + H(+) = 5-enolpyruvoyl-6-hydroxy-2-succinyl-cyclohex-3-ene-1-carboxylate + CO2. Its pathway is quinol/quinone metabolism; 1,4-dihydroxy-2-naphthoate biosynthesis; 1,4-dihydroxy-2-naphthoate from chorismate: step 2/7. It participates in quinol/quinone metabolism; menaquinone biosynthesis. In terms of biological role, catalyzes the thiamine diphosphate-dependent decarboxylation of 2-oxoglutarate and the subsequent addition of the resulting succinic semialdehyde-thiamine pyrophosphate anion to isochorismate to yield 2-succinyl-5-enolpyruvyl-6-hydroxy-3-cyclohexene-1-carboxylate (SEPHCHC). The polypeptide is 2-succinyl-5-enolpyruvyl-6-hydroxy-3-cyclohexene-1-carboxylate synthase (Salmonella dublin (strain CT_02021853)).